Reading from the N-terminus, the 179-residue chain is Large ribosomal subunit protein uL5 (179 aa).

The protein belongs to the universal ribosomal protein uL5 family. Part of the 50S ribosomal subunit; part of the 5S rRNA/L5/L18/L25 subcomplex. Contacts the 5S rRNA and the P site tRNA. Forms a bridge to the 30S subunit in the 70S ribosome.

Functionally, this is one of the proteins that bind and probably mediate the attachment of the 5S RNA into the large ribosomal subunit, where it forms part of the central protuberance. In the 70S ribosome it contacts protein S13 of the 30S subunit (bridge B1b), connecting the 2 subunits; this bridge is implicated in subunit movement. Contacts the P site tRNA; the 5S rRNA and some of its associated proteins might help stabilize positioning of ribosome-bound tRNAs. This chain is Large ribosomal subunit protein uL5, found in Synechococcus sp. (strain CC9605).